Here is a 375-residue protein sequence, read N- to C-terminus: G-protein coupled estrogen receptor 1 (375 aa).

Met-1 is modified (N-acetylmethionine). The Extracellular portion of the chain corresponds to Met-1–Ser-62. 3 N-linked (GlcNAc...) asparagine glycosylation sites follow: Asn-25, Asn-32, and Asn-44. The helical transmembrane segment at Cys-63 to Asn-84 threads the bilayer. Residues Ile-85–Leu-96 lie on the Cytoplasmic side of the membrane. Residues Tyr-97–His-120 traverse the membrane as a helical segment. Residues Glu-121–Phe-132 are Extracellular-facing. Cys-130 and Cys-207 are oxidised to a cystine. Residues Met-133 to Phe-153 traverse the membrane as a helical segment. Residues Asp-154–Arg-175 lie on the Cytoplasmic side of the membrane. The helical transmembrane segment at Leu-176–Thr-194 threads the bilayer. Topologically, residues Ala-195 to Thr-220 are extracellular. A helical membrane pass occupies residues Leu-221 to Leu-236. Over Ile-237–Arg-259 the chain is Cytoplasmic. The helical transmembrane segment at Met-260 to Ser-280 threads the bilayer. Topologically, residues Val-281 to Gly-306 are extracellular. The helical transmembrane segment at His-307–Leu-327 threads the bilayer. Topologically, residues Gly-328 to Val-375 are cytoplasmic.

This sequence belongs to the G-protein coupled receptor 1 family. Homodimer. Heterodimer; heterodimerizes with other G-protein-coupled receptor (GPCRs) like CRHR1, HTR1A and PAQR8. Interacts (via C-terminus tail motif) with DLG4 (via N-terminus tandem pair of PDZ domains); the interaction is direct and induces the increase of GPER1 protein levels residing at the plasma membrane surface in a estradiol-independent manner. Interacts with RAMP3; the interaction confers proper subcellular localization and function in cardioprotection. Interacts with KRT7 and KRT8. Interacts with EGFR; the interaction increases after agonist-induced stimulation in cancer-associated fibroblasts (CAF). Interacts with EGFR and ESR1. Ubiquitinated; ubiquitination occurs at the plasma membrane and leads to proteasome-mediated degradation. In terms of processing, glycosylated. As to expression, expressed in placenta, endothelial and epithelial cells, non laboring and laboring term myometrium, fibroblasts and cancer-associated fibroblasts (CAF), prostate cancer cells and invasive adenocarcinoma (at protein level). Ubiquitously expressed, but is most abundant in placenta. In brain regions, expressed as a 2.8 kb transcript in basal forebrain, frontal cortex, thalamus, hippocampus, caudate and putamen.

It is found in the nucleus. The protein resides in the cytoplasm. It localises to the perinuclear region. The protein localises to the cytoskeleton. Its subcellular location is the cell membrane. It is found in the basolateral cell membrane. The protein resides in the cytoplasmic vesicle membrane. It localises to the early endosome. The protein localises to the recycling endosome. Its subcellular location is the golgi apparatus membrane. It is found in the golgi apparatus. The protein resides in the trans-Golgi network. It localises to the endoplasmic reticulum membrane. The protein localises to the cell projection. Its subcellular location is the dendrite. It is found in the dendritic spine membrane. The protein resides in the axon. It localises to the postsynaptic density. The protein localises to the mitochondrion membrane. Its function is as follows. G-protein coupled estrogen receptor that binds to 17-beta-estradiol (E2) with high affinity, leading to rapid and transient activation of numerous intracellular signaling pathways. Stimulates cAMP production, calcium mobilization and tyrosine kinase Src inducing the release of heparin-bound epidermal growth factor (HB-EGF) and subsequent transactivation of the epidermal growth factor receptor (EGFR), activating downstream signaling pathways such as PI3K/Akt and ERK/MAPK. Mediates pleiotropic functions among others in the cardiovascular, endocrine, reproductive, immune and central nervous systems. Has a role in cardioprotection by reducing cardiac hypertrophy and perivascular fibrosis in a RAMP3-dependent manner. Regulates arterial blood pressure by stimulating vasodilation and reducing vascular smooth muscle and microvascular endothelial cell proliferation. Plays a role in blood glucose homeostasis contributing to the insulin secretion response by pancreatic beta cells. Triggers mitochondrial apoptosis during pachytene spermatocyte differentiation. Stimulates uterine epithelial cell proliferation. Enhances uterine contractility in response to oxytocin. Contributes to thymic atrophy by inducing apoptosis. Attenuates TNF-mediated endothelial expression of leukocyte adhesion molecules. Promotes neuritogenesis in developing hippocampal neurons. Plays a role in acute neuroprotection against NMDA-induced excitotoxic neuronal death. Increases firing activity and intracellular calcium oscillations in luteinizing hormone-releasing hormone (LHRH) neurons. Inhibits early osteoblast proliferation at growth plate during skeletal development. Inhibits mature adipocyte differentiation and lipid accumulation. Involved in the recruitment of beta-arrestin 2 ARRB2 at the plasma membrane in epithelial cells. Also functions as a receptor for aldosterone mediating rapid regulation of vascular contractibility through the PI3K/ERK signaling pathway. Involved in cancer progression regulation. Stimulates cancer-associated fibroblast (CAF) proliferation by a rapid genomic response through the EGFR/ERK transduction pathway. Associated with EGFR, may act as a transcription factor activating growth regulatory genes (c-fos, cyclin D1). Promotes integrin alpha-5/beta-1 and fibronectin (FN) matrix assembly in breast cancer cells. The polypeptide is G-protein coupled estrogen receptor 1 (Homo sapiens (Human)).